Reading from the N-terminus, the 160-residue chain is Large ribosomal subunit protein uL15 (160 aa).

Positions 1 to 13 (MKLNELRDNEGAA) are enriched in basic and acidic residues. Residues 1-51 (MKLNELRDNEGAARKKKRVARGPGSGKGKTAGRGIKGQKSRSGVALNGYEG) form a disordered region. Residues 23–35 (PGSGKGKTAGRGI) are compositionally biased toward gly residues.

It belongs to the universal ribosomal protein uL15 family. In terms of assembly, part of the 50S ribosomal subunit.

In terms of biological role, binds to the 23S rRNA. This is Large ribosomal subunit protein uL15 from Cereibacter sphaeroides (strain ATCC 17025 / ATH 2.4.3) (Rhodobacter sphaeroides).